The sequence spans 362 residues: Heat-inducible transcription repressor HrcA (362 aa).

This sequence belongs to the HrcA family.

In terms of biological role, negative regulator of class I heat shock genes (grpE-dnaK-dnaJ and groELS operons). Prevents heat-shock induction of these operons. In Bradyrhizobium sp. (strain ORS 278), this protein is Heat-inducible transcription repressor HrcA.